Here is a 688-residue protein sequence, read N- to C-terminus: Eukaryotic translation initiation factor 3 subunit B (688 aa).

Residues 1 to 28 (MAKKKGDQYDSDGAEDQDYDEEPVFEDP) are disordered. The span at 9 to 25 (YDSDGAEDQDYDEEPVF) shows a compositional bias: acidic residues. Residues 57 to 141 (NVIVVDNIPV…HTLLVNLFSD (85 aa)) form the RRM domain. 6 WD repeats span residues 208–246 (RERF…KINK), 247–287 (FAHS…EKRS), 291–329 (DGSS…LLDK), 332–367 (IKVQ…TLLE), 440–482 (EVKE…EPTM), and 527–572 (GDHY…KRVN). The stretch at 612 to 643 (DRVRMTRASKELLEKRAKLREQFVEYRAKRVN) forms a coiled coil.

Belongs to the eIF-3 subunit B family. Component of the eukaryotic translation initiation factor 3 (eIF-3) complex.

The protein resides in the cytoplasm. In terms of biological role, RNA-binding component of the eukaryotic translation initiation factor 3 (eIF-3) complex, which is involved in protein synthesis of a specialized repertoire of mRNAs and, together with other initiation factors, stimulates binding of mRNA and methionyl-tRNAi to the 40S ribosome. The eIF-3 complex specifically targets and initiates translation of a subset of mRNAs involved in cell proliferation. This is Eukaryotic translation initiation factor 3 subunit B from Culex quinquefasciatus (Southern house mosquito).